The sequence spans 404 residues: Argininosuccinate synthase (404 aa).

Residues 10–18 and A37 contribute to the ATP site; that span reads AYSGGLDTS. L-citrulline contacts are provided by Y90 and S95. ATP is bound at residue G120. Residues T122, N126, and D127 each coordinate L-aspartate. N126 lines the L-citrulline pocket. L-citrulline is bound by residues R130, S181, S190, E266, and Y278.

It belongs to the argininosuccinate synthase family. Type 1 subfamily. As to quaternary structure, homotetramer.

It is found in the cytoplasm. The enzyme catalyses L-citrulline + L-aspartate + ATP = 2-(N(omega)-L-arginino)succinate + AMP + diphosphate + H(+). The protein operates within amino-acid biosynthesis; L-arginine biosynthesis; L-arginine from L-ornithine and carbamoyl phosphate: step 2/3. The chain is Argininosuccinate synthase from Erythrobacter litoralis (strain HTCC2594).